The sequence spans 801 residues: Disks large homolog 4 (801 aa).

The L27 domain occupies 4–60 (KREDTERALQAMEACQSAGDEGFRTRAERLLTIFQSDLFQALLDIQEFYELTVFENQ). PDZ domains lie at 153–240 (EITL…LRHK) and 248–335 (ELKL…AKTL). The segment at 339–373 (HHQDAYNPPDITSSYSPHMDMSDYPQALSPSSPRR) is disordered. The PDZ 3 domain maps to 393 to 474 (RVVIHRGSTG…TVTIITQYRP (82 aa)). Positions 507–577 (KRSFFIRALF…PSKRRVERKE (71 aa)) constitute an SH3 domain. A Guanylate kinase-like domain is found at 610–786 (ARPVIILGPS…IYHHVKSVIE (177 aa)).

Belongs to the MAGUK family. Ubiquitinated by MDM2 in response to NMDA receptor activation, leading to proteasome-mediated degradation of DLG4 which is required for AMPA receptor endocytosis. Post-translationally, palmitoylated. Palmitoylation is required for targeting to postsynaptic density, plasma membrane and synapses.

The protein resides in the cell membrane. The protein localises to the postsynaptic density. It localises to the synapse. Its function is as follows. Postsynaptic scaffolding protein that plays a critical role in synaptogenesis and synaptic plasticity by providing a platform for the postsynaptic clustering of crucial synaptic proteins. This is Disks large homolog 4 (dlg4) from Danio rerio (Zebrafish).